Consider the following 177-residue polypeptide: Nucleoside triphosphate/diphosphate phosphatase (177 aa).

R23 (proton donor) is an active-site residue. The Mg(2+) site is built by N87, D103, D105, D107, D120, and E123.

This sequence belongs to the Ntdp family. Mg(2+) is required as a cofactor.

The catalysed reaction is a ribonucleoside 5'-triphosphate + H2O = a ribonucleoside 5'-diphosphate + phosphate + H(+). It catalyses the reaction a ribonucleoside 5'-diphosphate + H2O = a ribonucleoside 5'-phosphate + phosphate + H(+). Has nucleoside phosphatase activity towards nucleoside triphosphates and nucleoside diphosphates. The protein is Nucleoside triphosphate/diphosphate phosphatase of Streptococcus uberis (strain ATCC BAA-854 / 0140J).